The following is a 376-amino-acid chain: N-acetyldiaminopimelate deacetylase (376 aa).

The active site involves aspartate 69. The Proton acceptor role is filled by glutamate 128.

The protein belongs to the peptidase M20A family. N-acetyldiaminopimelate deacetylase subfamily.

It catalyses the reaction N-acetyl-(2S,6S)-2,6-diaminopimelate + H2O = (2S,6S)-2,6-diaminopimelate + acetate. The protein operates within amino-acid biosynthesis; L-lysine biosynthesis via DAP pathway; LL-2,6-diaminopimelate from (S)-tetrahydrodipicolinate (acetylase route): step 3/3. Functionally, catalyzes the conversion of N-acetyl-diaminopimelate to diaminopimelate and acetate. This chain is N-acetyldiaminopimelate deacetylase, found in Bacillus cereus (strain G9842).